A 179-amino-acid chain; its full sequence is Putative FBD-associated F-box protein At3g12840 (179 aa).

In terms of domain architecture, F-box spans 14 to 60 (AARINDLPDDLLATVLSFVPTKDAVATSILSKRWRPIWKRAVNLESD). Residues 101–152 (KWKQPDFVPLSLYRSLEAFEWIGFKGREKTEKKAAFHILRNACNLKTMAITT) enclose the FBD domain.

The protein is Putative FBD-associated F-box protein At3g12840 of Arabidopsis thaliana (Mouse-ear cress).